A 153-amino-acid chain; its full sequence is Putative pre-16S rRNA nuclease (153 aa).

Belongs to the YqgF nuclease family.

It localises to the cytoplasm. Its function is as follows. Could be a nuclease involved in processing of the 5'-end of pre-16S rRNA. This chain is Putative pre-16S rRNA nuclease, found in Prochlorococcus marinus (strain SARG / CCMP1375 / SS120).